The primary structure comprises 158 residues: Regulator of sigma D (158 aa).

It belongs to the Rsd/AlgQ family. Interacts with RpoD.

The protein resides in the cytoplasm. In terms of biological role, binds RpoD and negatively regulates RpoD-mediated transcription activation by preventing the interaction between the primary sigma factor RpoD with the catalytic core of the RNA polymerase and with promoter DNA. May be involved in replacement of the RNA polymerase sigma subunit from RpoD to RpoS during the transition from exponential growth to the stationary phase. This is Regulator of sigma D from Shigella boydii serotype 4 (strain Sb227).